A 208-amino-acid chain; its full sequence is Protein-L-isoaspartate O-methyltransferase (208 aa).

Ser-59 is a catalytic residue.

Belongs to the methyltransferase superfamily. L-isoaspartyl/D-aspartyl protein methyltransferase family.

It is found in the cytoplasm. The enzyme catalyses [protein]-L-isoaspartate + S-adenosyl-L-methionine = [protein]-L-isoaspartate alpha-methyl ester + S-adenosyl-L-homocysteine. Its function is as follows. Catalyzes the methyl esterification of L-isoaspartyl residues in peptides and proteins that result from spontaneous decomposition of normal L-aspartyl and L-asparaginyl residues. It plays a role in the repair and/or degradation of damaged proteins. The sequence is that of Protein-L-isoaspartate O-methyltransferase from Aliivibrio fischeri (strain MJ11) (Vibrio fischeri).